A 538-amino-acid polypeptide reads, in one-letter code: Bifunctional purine biosynthesis protein PurH (538 aa).

The region spanning 8–158 (IPAPDKVQVK…KNHAYVTTLT (151 aa)) is the MGS-like domain.

Belongs to the PurH family.

It catalyses the reaction (6R)-10-formyltetrahydrofolate + 5-amino-1-(5-phospho-beta-D-ribosyl)imidazole-4-carboxamide = 5-formamido-1-(5-phospho-D-ribosyl)imidazole-4-carboxamide + (6S)-5,6,7,8-tetrahydrofolate. The enzyme catalyses IMP + H2O = 5-formamido-1-(5-phospho-D-ribosyl)imidazole-4-carboxamide. The protein operates within purine metabolism; IMP biosynthesis via de novo pathway; 5-formamido-1-(5-phospho-D-ribosyl)imidazole-4-carboxamide from 5-amino-1-(5-phospho-D-ribosyl)imidazole-4-carboxamide (10-formyl THF route): step 1/1. It functions in the pathway purine metabolism; IMP biosynthesis via de novo pathway; IMP from 5-formamido-1-(5-phospho-D-ribosyl)imidazole-4-carboxamide: step 1/1. In Rhizobium rhizogenes (strain K84 / ATCC BAA-868) (Agrobacterium radiobacter), this protein is Bifunctional purine biosynthesis protein PurH.